The sequence spans 359 residues: DNA replication and repair protein RecF (359 aa).

30 to 37 lines the ATP pocket; that stretch reads GQNAQGKT.

This sequence belongs to the RecF family.

The protein localises to the cytoplasm. The RecF protein is involved in DNA metabolism; it is required for DNA replication and normal SOS inducibility. RecF binds preferentially to single-stranded, linear DNA. It also seems to bind ATP. The sequence is that of DNA replication and repair protein RecF from Lactococcus lactis subsp. cremoris (strain MG1363).